A 578-amino-acid chain; its full sequence is XK-related protein 6 (578 aa).

The next 7 helical transmembrane spans lie at 86–106 (WIVLALLVFFWDVGTDLWLAV), 114–134 (FLWSGLTLFFVLVPSVLVQIL), 253–273 (WLQCVSALSSLLSLAWVLASY), 307–327 (VLSLALFASVFHIYFGIFVVL), 348–368 (WEEVLFNMVVGVVYVFCWFNV), 377–397 (MVAYYVVVLLENVILTSLWYA), and 410–430 (LALCGVFLCFASGVACMVLYY).

It belongs to the XK family.

The protein localises to the cell membrane. The polypeptide is XK-related protein 6 (xkr6) (Tetraodon nigroviridis (Spotted green pufferfish)).